The sequence spans 440 residues: Ribulose bisphosphate carboxylase large chain (440 aa).

Residue lysine 3 is modified to N6,N6,N6-trimethyllysine. Asparagine 112 and threonine 162 together coordinate substrate. The active-site Proton acceptor is the lysine 164. Lysine 166 lines the substrate pocket. Mg(2+) contacts are provided by lysine 190, aspartate 192, and glutamate 193. At lysine 190 the chain carries N6-carboxylysine. Histidine 283 functions as the Proton acceptor in the catalytic mechanism. Residues arginine 284, histidine 316, and serine 368 each contribute to the substrate site.

The protein belongs to the RuBisCO large chain family. Type I subfamily. In terms of assembly, heterohexadecamer of 8 large chains and 8 small chains; disulfide-linked. The disulfide link is formed within the large subunit homodimers. It depends on Mg(2+) as a cofactor. In terms of processing, the disulfide bond which can form in the large chain dimeric partners within the hexadecamer appears to be associated with oxidative stress and protein turnover.

It localises to the plastid. The protein localises to the chloroplast. It carries out the reaction 2 (2R)-3-phosphoglycerate + 2 H(+) = D-ribulose 1,5-bisphosphate + CO2 + H2O. It catalyses the reaction D-ribulose 1,5-bisphosphate + O2 = 2-phosphoglycolate + (2R)-3-phosphoglycerate + 2 H(+). In terms of biological role, ruBisCO catalyzes two reactions: the carboxylation of D-ribulose 1,5-bisphosphate, the primary event in carbon dioxide fixation, as well as the oxidative fragmentation of the pentose substrate in the photorespiration process. Both reactions occur simultaneously and in competition at the same active site. This Bambusa multiplex (Hedge bamboo) protein is Ribulose bisphosphate carboxylase large chain.